The primary structure comprises 481 residues: UDP-N-acetylmuramate--L-alanine ligase (481 aa).

Position 126–132 (126–132 (GTHGKTT)) interacts with ATP.

Belongs to the MurCDEF family.

It is found in the cytoplasm. It catalyses the reaction UDP-N-acetyl-alpha-D-muramate + L-alanine + ATP = UDP-N-acetyl-alpha-D-muramoyl-L-alanine + ADP + phosphate + H(+). It participates in cell wall biogenesis; peptidoglycan biosynthesis. Functionally, cell wall formation. The chain is UDP-N-acetylmuramate--L-alanine ligase from Marinobacter nauticus (strain ATCC 700491 / DSM 11845 / VT8) (Marinobacter aquaeolei).